The chain runs to 256 residues: N-acetyl-D-glucosamine kinase (256 aa).

ATP contacts are provided by residues 4–11 (GFDMGGTK) and 133–140 (GVGGGLIV). His157, Cys177, Cys179, and Cys184 together coordinate Zn(2+).

Belongs to the ROK (NagC/XylR) family. NagK subfamily.

The enzyme catalyses N-acetyl-D-glucosamine + ATP = N-acetyl-D-glucosamine 6-phosphate + ADP + H(+). It functions in the pathway cell wall biogenesis; peptidoglycan recycling. Its function is as follows. Catalyzes the phosphorylation of N-acetyl-D-glucosamine (GlcNAc) derived from cell-wall degradation, yielding GlcNAc-6-P. This is N-acetyl-D-glucosamine kinase (nagK) from Yersinia pestis bv. Antiqua (strain Nepal516).